The primary structure comprises 307 residues: Heme A synthase (307 aa).

At 1-6 (MKFALR) the chain is on the cytoplasmic side. The chain crosses the membrane as a helical span at residues 7 to 27 (LLSVITTFVMLIVLIGGALVT). Topologically, residues 28–65 (KTGSGLGCGRQWPLCHGRFFPEMNPASIIEWSHRMSTG) are extracellular. An intrachain disulfide couples C35 to C42. The active site involves E57. Heme o is bound at residue H60. A helical membrane pass occupies residues 66-86 (VSTILVLALAVLCWKKISPVF). The Cytoplasmic segment spans residues 87 to 92 (RETKFL). The chain crosses the membrane as a helical span at residues 93-113 (VIMSIIFLLLQALLGALAVVF). At 114-121 (GSNALVMA) the chain is on the extracellular side. Residues 122 to 142 (LHFGISLISFASVLLLALLVF) form a helical membrane-spanning segment. Residue H123 participates in heme o binding. At 143–161 (EATRSETKLVKPLHIGKKM) the chain is on the cytoplasmic side. The chain crosses the membrane as a helical span at residues 162–182 (QFHIYGLITYTYIVVYTGAYV). Residues 183 to 216 (RHTKSSLACSVFPFCSKDGALPAYFNQWVQMSHR) are Extracellular-facing. C191 and C197 are disulfide-bonded. H215 provides a ligand contact to heme b. The chain crosses the membrane as a helical span at residues 217 to 237 (AAALLLFVWIFVAMFHAMKHY). The Cytoplasmic portion of the chain corresponds to 238–242 (KEQKQ). The chain crosses the membrane as a helical span at residues 243–263 (LYYGWIISAILITLQAISGVM). Residues 264–274 (SVYSQLALGYA) are Extracellular-facing. The helical transmembrane segment at 275–295 (LAHSFFISCLFGVLCYFCLLI) threads the bilayer. Heme b is bound at residue H277. The Cytoplasmic segment spans residues 296 to 307 (ARFKYESKEPFK).

This sequence belongs to the COX15/CtaA family. Type 1 subfamily. As to quaternary structure, interacts with CtaB. Requires heme b as cofactor.

The protein localises to the cell membrane. The enzyme catalyses Fe(II)-heme o + 2 A + H2O = Fe(II)-heme a + 2 AH2. It functions in the pathway porphyrin-containing compound metabolism; heme A biosynthesis; heme A from heme O: step 1/1. Functionally, catalyzes the conversion of heme O to heme A by two successive hydroxylations of the methyl group at C8. The first hydroxylation forms heme I, the second hydroxylation results in an unstable dihydroxymethyl group, which spontaneously dehydrates, resulting in the formyl group of heme A. In Bacillus pumilus (strain SAFR-032), this protein is Heme A synthase.